Here is a 323-residue protein sequence, read N- to C-terminus: Aquaporin-4 (323 aa).

Residues 1–36 are Cytoplasmic-facing; sequence MSDRPAARRWGKCGPLCTRESIMVAFKGVWTQTFWK. S-palmitoyl cysteine attachment occurs at residues C13 and C17. Residues 37–57 form a helical membrane-spanning segment; the sequence is AVTAEFLAMLIFVLLSLGSTI. Residues 58–69 are Extracellular-facing; sequence NWGGAEKPLPVD. A helical membrane pass occupies residues 70–89; the sequence is MVLISLCFGLSIATMVQCFG. Residues 90–93 lie on the Cytoplasmic side of the membrane; the sequence is HISG. Residues 94–101 constitute an intramembrane region (discontinuously helical); that stretch reads GHINPAVT. Residues 97–99 carry the NPA 1 motif; sequence NPA. Topologically, residues 102–115 are cytoplasmic; that stretch reads VAMVCTRRISIAKS. Phosphoserine; by PKG is present on S111. Residues 116-136 traverse the membrane as a helical segment; the sequence is VFYIAAQCLGAIIGAGILYLV. The Extracellular segment spans residues 137–155; sequence TPPSVVGGLGVTTVHGNLS. N153 is a glycosylation site (N-linked (GlcNAc...) asparagine). The chain crosses the membrane as a helical span at residues 156–176; that stretch reads AGHGLLVELIITFQLVFTIFA. Over 177 to 184 the chain is Cytoplasmic; that stretch reads SCDSKRTD. S180 is subject to Phosphoserine; by PKC. A helical membrane pass occupies residues 185–205; it reads VTGSIALAIGISVAIGHLFAI. A glycan (N-linked (GlcNAc...) asparagine) is linked at N206. The Extracellular portion of the chain corresponds to 206 to 208; sequence NYT. The discontinuously helical intramembrane region spans 209-222; that stretch reads GASMNPARSFGPAV. Positions 213 to 215 match the NPA 2 motif; it reads NPA. Over 223-231 the chain is Extracellular; sequence IMGNWENHW. The helical transmembrane segment at 232–252 threads the bilayer; the sequence is IYWVGPIIGAVLAGGLYEYVF. Topologically, residues 253–323 are cytoplasmic; that stretch reads CPDVELKRRF…DPSGEVLSSV (71 aa). S276 and S285 each carry phosphoserine. T289 is modified (phosphothreonine). The residue at position 321 (S321) is a Phosphoserine.

It belongs to the MIP/aquaporin (TC 1.A.8) family. As to quaternary structure, homotetramer. The tetramers can form oligomeric arrays in membranes. The size of the oligomers differs between tissues and is smaller in skeletal muscle than in brain. Interaction between AQP4 oligomeric arrays in close-by cells can contribute to cell-cell adhesion. Part of a complex containing MLC1, TRPV4, HEPACAM and ATP1B1. Phosphorylation by PKC at Ser-180 reduces conductance by 50%. Phosphorylation by PKG at Ser-111 in response to glutamate increases conductance by 40%. Post-translationally, isoform 2: Palmitoylated on its N-terminal region. Isoform 1: Not palmitoylated. In terms of tissue distribution, detected in brain and lung.

The protein localises to the cell membrane. It is found in the basolateral cell membrane. Its subcellular location is the endosome membrane. The protein resides in the sarcolemma. It localises to the cell projection. It carries out the reaction H2O(in) = H2O(out). Its function is as follows. Forms a water-specific channel. Plays an important role in brain water homeostasis and in glymphatic solute transport. Required for a normal rate of water exchange across the blood brain interface. Required for normal levels of cerebrospinal fluid influx into the brain cortex and parenchyma along paravascular spaces that surround penetrating arteries, and for normal drainage of interstitial fluid along paravenous drainage pathways. Thereby, it is required for normal clearance of solutes from the brain interstitial fluid, including soluble beta-amyloid peptides derived from APP. Plays a redundant role in urinary water homeostasis and urinary concentrating ability. This chain is Aquaporin-4 (AQP4), found in Bos taurus (Bovine).